Consider the following 91-residue polypeptide: Small ribosomal subunit protein uS19 (91 aa).

This sequence belongs to the universal ribosomal protein uS19 family.

In terms of biological role, protein S19 forms a complex with S13 that binds strongly to the 16S ribosomal RNA. In Pseudomonas syringae pv. tomato (strain ATCC BAA-871 / DC3000), this protein is Small ribosomal subunit protein uS19.